We begin with the raw amino-acid sequence, 904 residues long: Toll-like receptor 3 (904 aa).

A signal peptide spans 1-26; the sequence is MSRPLPYHIHFFSGLLTCWILCTSSA. The LRRNT domain occupies 27-52; the sequence is HKCTVRHEVADCSHLKLTQIPDDLPT. Topologically, residues 27-705 are lumenal; sequence HKCTVRHEVA…PCKDSAPFEL (679 aa). Residues Cys29 and Cys38 are joined by a disulfide bond. 3 N-linked (GlcNAc...) asparagine glycosylation sites follow: Asn53, Asn58, and Asn71. LRR repeat units follow at residues 53-74, 77-98, 101-122, 125-146, 149-170, and 173-194; these read NITV…NFTR, QLTT…LCQS, WLEI…TFIF, NLTE…PFKN, NLIK…TQLQ, and NLQE…EFDF. Cys96 and Cys123 are joined by a disulfide. N-linked (GlcNAc...) asparagine glycosylation occurs at Asn125. A glycan (N-linked (GlcNAc...) asparagine) is linked at Asn197. LRR repeat units follow at residues 199–220 and 223–245; these read SLKR…CFHT and ELSG…LCLE. N-linked (GlcNAc...) asparagine glycosylation is found at Asn248, Asn253, Asn276, and Asn292. 14 LRR repeats span residues 250–271, 276–297, 300–321, 324–345, 357–378, 381–401, 409–430, 433–455, 466–487, 508–529, 532–553, 564–585, 588–609, and 612–633; these read SIEN…TFDG, NLTT…SFAW, HLEY…SFYG, NLRR…TSLP, CLEY…TFTG, RLKF…TNET, PLLL…AFSW, HLEV…EWRG, YNKY…QRLM, NLVI…LLKG, KLEI…ANPG, HLHI…AFKD, ELKS…VFDN, and SLKS…VFGP. Asn399 carries an N-linked (GlcNAc...) asparagine glycan. Residues Asn637, Asn663, and Asn668 are each glycosylated (N-linked (GlcNAc...) asparagine). In terms of domain architecture, LRRCT spans 646 to 699; sequence NPFDCTCESIAWFVNWINITHTNISELSNHYLCNTPPQYHGYPVMLFDVSPCKD. Intrachain disulfides connect Cys650–Cys678 and Cys652–Cys697. The chain crosses the membrane as a helical span at residues 706–726; that stretch reads LFMININILLIFIFIVLLIHF. Residues 727–904 are Cytoplasmic-facing; that stretch reads EGWRISFYWN…VALGSRNSAH (178 aa). The TIR domain occupies 754 to 897; that stretch reads FEYAAYIIHA…AFHHKLKVAL (144 aa). Phosphotyrosine is present on Tyr759. Residues Lys765, Lys812, and Lys831 each participate in a glycyl lysine isopeptide (Lys-Gly) (interchain with G-Cter in ubiquitin) cross-link. Tyr858 is subject to Phosphotyrosine.

Belongs to the Toll-like receptor family. Monomer and homodimer; dimerization is triggered by ligand-binding, the signaling unit is composed of one ds-RNA of around 40 bp and two TLR3 molecules, and lateral clustering of signaling units along the length of the ds-RNA ligand is required for TLR3 signal transduction. Interacts (via transmembrane domain) with UNC93B1; the interaction is required for transport from the ER to the endosomes. Interacts with TICAM1 (via the TIR domain) in response to poly(I:C) and this interaction is enhanced in the presence of WDFY1. Interacts with SRC; upon binding of double-stranded RNA. The tyrosine-phosphorylated form (via TIR domain) interacts with WDFY1 (via WD repeat 2) in response to poly(I:C). In terms of processing, TLR3 signaling requires a proteolytic cleavage mediated by cathepsins CTSB and CTSH, the cleavage occurs between amino acids 252 and 346. The cleaved form of TLR3 is the predominant form found in endosomes. Post-translationally, ubiquitinated by TRIM3; leading to recognition and sorting of polyubiquitinated TLR3 by the ESCRT complexes. Ubiquitinated by ZNRF1 via 'Lys-63'-linked ubiquitin chains; leading to TLR3 lysosomal trafficking and degradation. Ubiquitinated by RNF170 at Lys-765 via 'Lys-48'-linked ubiquitin chains; leading to TLR3 proteasomal degradation.

Its subcellular location is the endoplasmic reticulum membrane. It localises to the endosome membrane. The protein localises to the early endosome. Functionally, key component of innate and adaptive immunity. TLRs (Toll-like receptors) control host immune response against pathogens through recognition of molecular patterns specific to microorganisms. TLR3 is a nucleotide-sensing TLR which is activated by double-stranded RNA, a sign of viral infection. Acts via the adapter TRIF/TICAM1, leading to NF-kappa-B activation, IRF3 nuclear translocation, cytokine secretion and the inflammatory response. This Bos taurus (Bovine) protein is Toll-like receptor 3 (TLR3).